The sequence spans 128 residues: Small ribosomal subunit protein uS9 (128 aa).

A compositionally biased stretch (basic and acidic residues) spans 97–113; sequence RSEGFMTRDPRSVERKK. The segment at 97-128 is disordered; it reads RSEGFMTRDPRSVERKKPGQPKARRRFQFSKR. A compositionally biased stretch (basic residues) spans 114-128; the sequence is PGQPKARRRFQFSKR.

This sequence belongs to the universal ribosomal protein uS9 family.

The sequence is that of Small ribosomal subunit protein uS9 from Bacteroides fragilis (strain ATCC 25285 / DSM 2151 / CCUG 4856 / JCM 11019 / LMG 10263 / NCTC 9343 / Onslow / VPI 2553 / EN-2).